A 368-amino-acid chain; its full sequence is Microtubule-associated protein Jupiter (368 aa).

At Ser-30 the chain carries Phosphoserine. Thr-41 bears the Phosphothreonine mark. Over residues 81–93 the composition is skewed to basic and acidic residues; that stretch reads RRGQKSVDSHSRL. Positions 81–106 are disordered; it reads RRGQKSVDSHSRLFGEPSRPITPGKN. The residue at position 102 (Thr-102) is a Phosphothreonine. Phosphoserine is present on residues Ser-111, Ser-146, and Ser-157. Low complexity-rich tracts occupy residues 129-157 and 238-248; these read NGNT…VSSS and GRYGYSSQSRR. Disordered regions lie at residues 129-164, 196-256, and 316-368; these read NGNT…LKIN, SQGN…SPLN, and KPKK…SGLW. The segment covering 337 to 354 has biased composition (polar residues); sequence GSDSAQTPTMNGANQVIN.

The protein belongs to the MAP Jupiter family.

The protein localises to the nucleus. The protein resides in the cytoplasm. It is found in the cytoskeleton. It localises to the spindle. Its function is as follows. Binds to all microtubule populations. This chain is Microtubule-associated protein Jupiter, found in Drosophila willistoni (Fruit fly).